We begin with the raw amino-acid sequence, 299 residues long: tRNA dimethylallyltransferase (299 aa).

10–17 serves as a coordination point for ATP; that stretch reads GPTAVGKT. 12–17 is a binding site for substrate; it reads TAVGKT. The segment at 35 to 38 is interaction with substrate tRNA; that stretch reads DSQQ.

This sequence belongs to the IPP transferase family. As to quaternary structure, monomer. Mg(2+) is required as a cofactor.

It catalyses the reaction adenosine(37) in tRNA + dimethylallyl diphosphate = N(6)-dimethylallyladenosine(37) in tRNA + diphosphate. In terms of biological role, catalyzes the transfer of a dimethylallyl group onto the adenine at position 37 in tRNAs that read codons beginning with uridine, leading to the formation of N6-(dimethylallyl)adenosine (i(6)A). The polypeptide is tRNA dimethylallyltransferase (Streptococcus thermophilus (strain ATCC BAA-491 / LMD-9)).